The primary structure comprises 557 residues: Arginine--tRNA ligase (557 aa).

The 'HIGH' region signature appears at 132–142; that stretch reads ANPTGNLHLGH.

This sequence belongs to the class-I aminoacyl-tRNA synthetase family. In terms of assembly, monomer.

It is found in the cytoplasm. It carries out the reaction tRNA(Arg) + L-arginine + ATP = L-arginyl-tRNA(Arg) + AMP + diphosphate. In Geobacillus thermodenitrificans (strain NG80-2), this protein is Arginine--tRNA ligase.